A 94-amino-acid polypeptide reads, in one-letter code: Co-chaperonin GroES (94 aa).

This sequence belongs to the GroES chaperonin family. In terms of assembly, heptamer of 7 subunits arranged in a ring. Interacts with the chaperonin GroEL.

It localises to the cytoplasm. Functionally, together with the chaperonin GroEL, plays an essential role in assisting protein folding. The GroEL-GroES system forms a nano-cage that allows encapsulation of the non-native substrate proteins and provides a physical environment optimized to promote and accelerate protein folding. GroES binds to the apical surface of the GroEL ring, thereby capping the opening of the GroEL channel. The chain is Co-chaperonin GroES from Exiguobacterium sp. (strain ATCC BAA-1283 / AT1b).